The chain runs to 330 residues: Ketol-acid reductoisomerase (NADP(+)) (330 aa).

The region spanning 3 to 184 (LSVYYDKDID…GGGRMGVLET (182 aa)) is the KARI N-terminal Rossmann domain. NADP(+) is bound by residues 26–29 (YGTQ), Ser-52, and Ser-54. Residue His-109 is part of the active site. Position 135 (Gly-135) interacts with NADP(+). The region spanning 185–329 (SFKEECESDL…EILRTPFNHE (145 aa)) is the KARI C-terminal knotted domain. Mg(2+) contacts are provided by Asp-193, Glu-197, Glu-229, and Glu-233. Ser-254 lines the substrate pocket.

The protein belongs to the ketol-acid reductoisomerase family. Requires Mg(2+) as cofactor.

It carries out the reaction (2R)-2,3-dihydroxy-3-methylbutanoate + NADP(+) = (2S)-2-acetolactate + NADPH + H(+). It catalyses the reaction (2R,3R)-2,3-dihydroxy-3-methylpentanoate + NADP(+) = (S)-2-ethyl-2-hydroxy-3-oxobutanoate + NADPH + H(+). The protein operates within amino-acid biosynthesis; L-isoleucine biosynthesis; L-isoleucine from 2-oxobutanoate: step 2/4. Its pathway is amino-acid biosynthesis; L-valine biosynthesis; L-valine from pyruvate: step 2/4. In terms of biological role, involved in the biosynthesis of branched-chain amino acids (BCAA). Catalyzes an alkyl-migration followed by a ketol-acid reduction of (S)-2-acetolactate (S2AL) to yield (R)-2,3-dihydroxy-isovalerate. In the isomerase reaction, S2AL is rearranged via a Mg-dependent methyl migration to produce 3-hydroxy-3-methyl-2-ketobutyrate (HMKB). In the reductase reaction, this 2-ketoacid undergoes a metal-dependent reduction by NADPH to yield (R)-2,3-dihydroxy-isovalerate. The sequence is that of Ketol-acid reductoisomerase (NADP(+)) from Helicobacter acinonychis (strain Sheeba).